Reading from the N-terminus, the 305-residue chain is Superkiller complex protein 8 (305 aa).

Residue methionine 1 is modified to N-acetylmethionine. Threonine 2 carries the N-acetylthreonine; in WD repeat-containing protein 61, N-terminally processed modification. WD repeat units follow at residues 14 to 57 (AHDD…LELQ), 62 to 101 (GHQL…QMKS), 104 to 143 (AGPV…KEYS), 146 to 187 (TRGK…HTLE), 188 to 227 (GHAM…LAGT), 230 to 269 (GHAS…CIHT), and 272 to 305 (DHQD…DCPI).

The protein belongs to the SKI8 family. Component of the PAF1 complex, which consists of CDC73, PAF1, LEO1, CTR9, RTF1 and SKIC8. The PAF1 complex interacts with PHF5A. Within the PAF1 complex interacts directly with PHF5A. Component of the SKI complex which consists of SKIC2, SKIC3 and SKIC8.

The protein resides in the nucleus. It localises to the cytoplasm. In terms of biological role, component of the PAF1 complex (PAF1C) which has multiple functions during transcription by RNA polymerase II and is implicated in regulation of development and maintenance of embryonic stem cell pluripotency. PAF1C associates with RNA polymerase II through interaction with POLR2A CTD non-phosphorylated and 'Ser-2'- and 'Ser-5'-phosphorylated forms and is involved in transcriptional elongation, acting both independently and synergistically with TCEA1 and in cooperation with the DSIF complex and HTATSF1. PAF1C is required for transcription of Hox and Wnt target genes. PAF1C is involved in hematopoiesis and stimulates transcriptional activity of KMT2A/MLL1; it promotes leukemogenesis through association with KMT2A/MLL1-rearranged oncoproteins, such as KMT2A/MLL1-MLLT3/AF9 and KMT2A/MLL1-MLLT1/ENL. PAF1C is involved in histone modifications such as ubiquitination of histone H2B and methylation on histone H3 'Lys-4' (H3K4me3). PAF1C recruits the RNF20/40 E3 ubiquitin-protein ligase complex and the E2 enzyme UBE2A or UBE2B to chromatin which mediate monoubiquitination of 'Lys-120' of histone H2B (H2BK120ub1); UB2A/B-mediated H2B ubiquitination is proposed to be coupled to transcription. PAF1C is involved in mRNA 3' end formation probably through association with cleavage and poly(A) factors. In case of infection by influenza A strain H3N2, PAF1C associates with viral NS1 protein, thereby regulating gene transcription. Required for mono- and trimethylation on histone H3 'Lys-4' (H3K4me3), dimethylation on histone H3 'Lys-79' (H3K4me3). Required for Hox gene transcription. Also acts as a component of the SKI complex, a multiprotein complex that assists the RNA-degrading exosome during the mRNA decay and quality-control pathways. The SKI complex catalyzes mRNA extraction from 80S ribosomal complexes in the 3'-5' direction and channels mRNA to the cytosolic exosome for degradation. SKI-mediated extraction of mRNA from stalled ribosomes allow binding of the Pelota-HBS1L complex and subsequent ribosome disassembly by ABCE1 for ribosome recycling. The sequence is that of Superkiller complex protein 8 (Skic8) from Mus musculus (Mouse).